A 74-amino-acid polypeptide reads, in one-letter code: Protein F9 homolog (74 aa).

Residues 1-34 (GHAAANCALARVATALTRRVPASRHGLAEGGTPP) are Virion surface-facing. A helical membrane pass occupies residues 35–55 (WTLLLAVAAVAVLGVVAISLL). Residues 56 to 73 (RRALRIRFRYSKSIQTLR) lie on the Intravirion side of the membrane.

The protein belongs to the chordopoxvirinae L1 protein family.

The protein localises to the virion membrane. This Capra hircus (Goat) protein is Protein F9 homolog.